A 307-amino-acid polypeptide reads, in one-letter code: Ribonuclease Z (307 aa).

Zn(2+) is bound by residues H63, H65, D67, H68, H143, D213, and H271. The active-site Proton acceptor is D67.

Belongs to the RNase Z family. As to quaternary structure, homodimer. Zn(2+) serves as cofactor.

It carries out the reaction Endonucleolytic cleavage of RNA, removing extra 3' nucleotides from tRNA precursor, generating 3' termini of tRNAs. A 3'-hydroxy group is left at the tRNA terminus and a 5'-phosphoryl group is left at the trailer molecule.. Its function is as follows. Zinc phosphodiesterase, which displays some tRNA 3'-processing endonuclease activity. Probably involved in tRNA maturation, by removing a 3'-trailer from precursor tRNA. This Lactococcus lactis subsp. cremoris (strain MG1363) protein is Ribonuclease Z.